Here is a 31-residue protein sequence, read N- to C-terminus: Cycloviolacin-O25 (31 aa).

Positions 1-31 (DIFCGETCAFIPCITHVPGTCSCKSKVCYFN) form a cross-link, cyclopeptide (Asp-Asn). Intrachain disulfides connect cysteine 4/cysteine 21, cysteine 8/cysteine 23, and cysteine 13/cysteine 28.

Post-translationally, this is a cyclic peptide. In terms of tissue distribution, expressed in roots and runners but not in leaves, petals and petioles (at protein level).

In terms of biological role, probably participates in a plant defense mechanism. The sequence is that of Cycloviolacin-O25 from Viola odorata (Sweet violet).